A 161-amino-acid chain; its full sequence is Ecotin (161 aa).

Positions 1–23 (MGNFTVRATAGLMLASLSTLAHA) are cleaved as a signal peptide. The cysteines at positions 69 and 106 are disulfide-linked.

It belongs to the protease inhibitor I11 (ecotin) family. In terms of assembly, homodimer.

Its subcellular location is the periplasm. General inhibitor of family S1 serine proteases. The polypeptide is Ecotin (Pseudomonas fluorescens (strain Pf0-1)).